The chain runs to 211 residues: Thiamine-phosphate synthase (211 aa).

4-amino-2-methyl-5-(diphosphooxymethyl)pyrimidine is bound by residues 39-43 (QLREK) and Asn-71. The Mg(2+) site is built by Asp-72 and Asp-91. Ser-110 contributes to the 4-amino-2-methyl-5-(diphosphooxymethyl)pyrimidine binding site. Residue 136-138 (TAT) coordinates 2-[(2R,5Z)-2-carboxy-4-methylthiazol-5(2H)-ylidene]ethyl phosphate. Position 139 (Lys-139) interacts with 4-amino-2-methyl-5-(diphosphooxymethyl)pyrimidine. 2-[(2R,5Z)-2-carboxy-4-methylthiazol-5(2H)-ylidene]ethyl phosphate-binding positions include Ala-167 and 187 to 188 (VS).

Belongs to the thiamine-phosphate synthase family. The cofactor is Mg(2+).

The catalysed reaction is 2-[(2R,5Z)-2-carboxy-4-methylthiazol-5(2H)-ylidene]ethyl phosphate + 4-amino-2-methyl-5-(diphosphooxymethyl)pyrimidine + 2 H(+) = thiamine phosphate + CO2 + diphosphate. It catalyses the reaction 2-(2-carboxy-4-methylthiazol-5-yl)ethyl phosphate + 4-amino-2-methyl-5-(diphosphooxymethyl)pyrimidine + 2 H(+) = thiamine phosphate + CO2 + diphosphate. The enzyme catalyses 4-methyl-5-(2-phosphooxyethyl)-thiazole + 4-amino-2-methyl-5-(diphosphooxymethyl)pyrimidine + H(+) = thiamine phosphate + diphosphate. Its pathway is cofactor biosynthesis; thiamine diphosphate biosynthesis; thiamine phosphate from 4-amino-2-methyl-5-diphosphomethylpyrimidine and 4-methyl-5-(2-phosphoethyl)-thiazole: step 1/1. In terms of biological role, condenses 4-methyl-5-(beta-hydroxyethyl)thiazole monophosphate (THZ-P) and 2-methyl-4-amino-5-hydroxymethyl pyrimidine pyrophosphate (HMP-PP) to form thiamine monophosphate (TMP). This chain is Thiamine-phosphate synthase, found in Solidesulfovibrio magneticus (strain ATCC 700980 / DSM 13731 / RS-1) (Desulfovibrio magneticus).